Consider the following 4080-residue polypeptide: Hybrid PKS-NRPS synthetase poxE (4080 aa).

The Ketosynthase family 3 (KS3) domain maps to 8–442 (REPIAIVGSG…GTNAHAIIEA (435 aa)). Active-site for beta-ketoacyl synthase activity residues include cysteine 181, histidine 320, and histidine 362. The interval 554-878 (VFTGQGAQWA…QRGMNDVEAM (325 aa)) is malonyl-CoA:ACP transacylase (MAT) domain. The N-terminal hotdog fold stretch occupies residues 944 to 1078 (HPILGTRCPD…GRLVITYGPV (135 aa)). In terms of domain architecture, PKS/mFAS DH spans 944–1246 (HPILGTRCPD…AVPLEATNAD (303 aa)). Positions 945-1243 (PILGTRCPDG…GIHAVPLEAT (299 aa)) are dehydratase (DH) domain. Residue histidine 976 is the Proton acceptor; for dehydratase activity of the active site. The tract at residues 1093–1246 (MVDVPSERFY…AVPLEATNAD (154 aa)) is C-terminal hotdog fold. Aspartate 1152 functions as the Proton donor; for dehydratase activity in the catalytic mechanism. Residues 1400-1585 (HFSDYLASVV…GVDTFTSDAD (186 aa)) are methyltransferase (MT) domain. The interval 2118–2292 (TYWLVGLTGS…AGSVMNIGAI (175 aa)) is ketoreductase (KR)domain. Positions 2399–2478 (TTDEIYEVIK…TIGEIIKFVL (80 aa)) are peptidyl carrier protein. Positions 2405-2481 (EVIKECFIVK…EIIKFVLEKL (77 aa)) constitute a Carrier 1 domain. The residue at position 2441 (serine 2441) is an O-(pantetheine 4'-phosphoryl)serine. The tract at residues 2488-2569 (SLGLSPPTGA…AASPSIHTEE (82 aa)) is disordered. A compositionally biased stretch (basic and acidic residues) spans 2511 to 2525 (VVVERRNVPRLEKKI). Positions 2528 to 2545 (SAGSRTSSSVTGTSKSVS) are enriched in low complexity. Over residues 2551-2565 (DTASSQTSEAASPSI) the composition is skewed to polar residues. The interval 2607–3036 (KEPLSFGQSR…DSKQPGGHVS (430 aa)) is condensation. An adenylation region spans residues 3069–3478 (DMAKQYPQKL…DGRLRIEGRI (410 aa)). In terms of domain architecture, Carrier 2 spans 3593-3673 (AHLNEAQAQM…KMALLIKPQE (81 aa)). Positions 3598–3670 (AQAQMVQLWE…TLEKMALLIK (73 aa)) are thiolation. Serine 3633 carries the post-translational modification O-(pantetheine 4'-phosphoryl)serine. Residues 3740-3959 (LTGATGFIGQ…DFVPVEQVVR (220 aa)) are reductase (RED) domain.

In the C-terminal section; belongs to the NRP synthetase family.

It participates in secondary metabolite biosynthesis. Functionally, hybrid PKS-NRPS synthetase; part of the gene cluster that mediates the biosynthesis of oxaleimides, cytotoxic compounds containing an unusual disubstituted succinimide moiety. The first step of the pathway is provided by the HR-PKS poxF that serves in a new mode of collaborative biosynthesis with the PKS-NRPS poxE, by providing the olefin containing amino acid substrate via the synthesis of an ACP-bound dec-4-enoate. The cytochrome P450 monooxygenase poxM-catalyzed oxidation at the alpha-position creates the enzyme-bound 2-hydroxydec-4-enoyl-ACP thioester, which may be prone to spontaneous hydrolysis to yield 2-hydroxydec-4-enoic acid due to increased electrophilicity of the carbonyl. 2-hydroxydec-4-enoic acid can then be further oxidized by poxM to yield the alpha-ketoacid 2-oxodec-4-enoicacid, which is reductively aminated by the aminotransferase poxL to yield (S,E)-2-aminodec-4-enoic acid. The Hybrid PKS-NRPS synthetase poxE then performs condensation between the octaketide product of its PKS modules and the amino group of (S,E)-2-aminodec-4-enoic acid which is activated and incorporated by the adenylation domain. The resulting aminoacyl product can be cyclized by the Diels-Alderase PoxQ and reductively released by the reductive (R) domain of poxE to yield an aldehyde intermediate. The released aldehyde is then substrate for a Knoevenagel condensation by the hydrolyase poxO followed by an oxidation at the 5-position of the pyrrolidone ring. The presence of the olefin from the amino acid building block allows for migration of the substituted allyl group to occur. This allylic transposition reaction takes place in a conjugate addition, semipinacol-like fashion to yield a succinimide intermediate. Iterative two-electron oxidations of the C7 methyl of the succinimide intermediate to the carboxylic acid can be catalyzed by one of two remaining cytochrome P450 monooxygenasess poxC or poxD to yield oxaleimide A. Subsequent oxidation yields the maleimide scaffold oxaleimide I. Both oxaleimide A and oxaleimide I can undergo oxidative modifications in the decalin ring to yield the series of products oxaleimides B to H. This chain is Hybrid PKS-NRPS synthetase poxE, found in Penicillium oxalicum.